The primary structure comprises 201 residues: High mobility group protein homolog 068R (201 aa).

2 consecutive DNA-binding regions (HMG box) follow at residues proline 70–lysine 138 and threonine 143–lysine 201.

It belongs to the IIV-6 401R family.

The protein resides in the host nucleus. In Invertebrate iridescent virus 3 (IIV-3), this protein is High mobility group protein homolog 068R.